We begin with the raw amino-acid sequence, 426 residues long: Endoglucanase Z (426 aa).

A signal peptide spans 1-43; that stretch reads MPLSYLDKNPVIDSKKHALRKKLFLSCAYFGLSLACLSSNAWA. The segment at 44–332 is catalytic; the sequence is SVEPLSVNGN…VKSIIQSWPY (289 aa). The active-site Proton donor is the Glu176. Glu263 (nucleophile) is an active-site residue. Residues 333–366 are linker; it reads KAGSAASATTDPSTDTTTDTTVDEPTTTDTPATA. Positions 336-367 are disordered; it reads SAASATTDPSTDTTTDTTVDEPTTTDTPATAD. The tract at residues 367 to 426 is cellulose-binding; sequence DCANANVYPNWVSKDWAGGQPTHNEAGQSIVYKGNLYTANWYTASVPGSDSSWTQVGSCN. An intrachain disulfide couples Cys368 to Cys425.

It belongs to the glycosyl hydrolase 5 (cellulase A) family.

The protein resides in the secreted. The catalysed reaction is Endohydrolysis of (1-&gt;4)-beta-D-glucosidic linkages in cellulose, lichenin and cereal beta-D-glucans.. Its function is as follows. Represents 97% of the global cellulase activity. The sequence is that of Endoglucanase Z (celZ) from Dickeya dadantii (strain 3937) (Erwinia chrysanthemi (strain 3937)).